Here is a 401-residue protein sequence, read N- to C-terminus: Imidazolonepropionase (401 aa).

Positions 70 and 72 each coordinate Fe(3+). 2 residues coordinate Zn(2+): His70 and His72. Residues Arg79, Tyr142, and His175 each contribute to the 4-imidazolone-5-propanoate site. An N-formimidoyl-L-glutamate-binding site is contributed by Tyr142. Fe(3+) is bound at residue His238. Position 238 (His238) interacts with Zn(2+). 4-imidazolone-5-propanoate is bound at residue Gln241. Asp313 serves as a coordination point for Fe(3+). Residue Asp313 participates in Zn(2+) binding. Residues Asn315 and Gly317 each contribute to the N-formimidoyl-L-glutamate site. 4-imidazolone-5-propanoate is bound at residue Thr318.

This sequence belongs to the metallo-dependent hydrolases superfamily. HutI family. Zn(2+) serves as cofactor. The cofactor is Fe(3+).

The protein localises to the cytoplasm. It catalyses the reaction 4-imidazolone-5-propanoate + H2O = N-formimidoyl-L-glutamate. It functions in the pathway amino-acid degradation; L-histidine degradation into L-glutamate; N-formimidoyl-L-glutamate from L-histidine: step 3/3. Catalyzes the hydrolytic cleavage of the carbon-nitrogen bond in imidazolone-5-propanoate to yield N-formimidoyl-L-glutamate. It is the third step in the universal histidine degradation pathway. The protein is Imidazolonepropionase of Xanthomonas campestris pv. campestris (strain 8004).